Consider the following 352-residue polypeptide: Molybdenum import ATP-binding protein ModC (352 aa).

Residues 1 to 229 (MLELNFSQTL…SVMNPWLPKE (229 aa)) form the ABC transporter domain. 31–38 (GVSGAGKT) provides a ligand contact to ATP. The region spanning 289–352 (QTSIRNVLRA…AQIKSVSITA (64 aa)) is the Mop domain.

This sequence belongs to the ABC transporter superfamily. Molybdate importer (TC 3.A.1.8) family. As to quaternary structure, the complex is composed of two ATP-binding proteins (ModC), two transmembrane proteins (ModB) and a solute-binding protein (ModA).

It localises to the cell inner membrane. It carries out the reaction molybdate(out) + ATP + H2O = molybdate(in) + ADP + phosphate + H(+). Its function is as follows. Part of the ABC transporter complex ModABC involved in molybdenum import. Responsible for energy coupling to the transport system. The protein is Molybdenum import ATP-binding protein ModC of Shigella dysenteriae serotype 1 (strain Sd197).